We begin with the raw amino-acid sequence, 84 residues long: CDC42 small effector protein 2 (84 aa).

S-palmitoyl cysteine attachment occurs at residues Cys10 and Cys11. Residues 29–42 (IGEPTNFAHTAHVG) form the CRIB domain. Phosphoserine occurs at positions 43 and 52.

Belongs to the CDC42SE/SPEC family. Interacts with CDC42 (in GTP-bound form). Interacts weakly with RAC1 and not at all with RHOA.

The protein resides in the cytoplasm. It is found in the cytoskeleton. The protein localises to the cell membrane. It localises to the cell projection. Its subcellular location is the phagocytic cup. Functionally, probably involved in the organization of the actin cytoskeleton by acting downstream of CDC42, inducing actin filament assembly. Alters CDC42-induced cell shape changes. In activated T-cells, may play a role in CDC42-mediated F-actin accumulation at the immunological synapse. May play a role in early contractile events in phagocytosis in macrophages. This Pongo abelii (Sumatran orangutan) protein is CDC42 small effector protein 2 (CDC42SE2).